Reading from the N-terminus, the 1746-residue chain is tRNA (32-2'-O)-methyltransferase regulator THADA (1746 aa).

Residues 1252-1286 adopt a coiled-coil conformation; it reads EQALAEIRRIVVELKALQLRLKNTEAANTKLNTNV.

Belongs to the THADA family. In terms of assembly, interacts with SERCA. In terms of tissue distribution, detected in the larval fat body, salivary glands and wing imaginal disks (at protein level).

It localises to the endoplasmic reticulum. In terms of biological role, together with methyltransferase Trm7-32, methylates the 2'-O-ribose of nucleotides at position 32 of the anticodon loop of substrate tRNAs. Plays a key role in energy homeostasis by regulating the balance between energy storage and heat production. Functions by negatively regulating Ca(2+) signaling pathways that are involved in heat production and maintaining correct lipid storage in the fat body. Regulates Ca(2+) signaling pathways by reducing the activity of the calcium-transporting ATPase SERCA possibly by promoting uncoupling of SERCA ATP hydrolysis from calcium pumping. May also function in the nervous system to control feeding behavior. This Drosophila melanogaster (Fruit fly) protein is tRNA (32-2'-O)-methyltransferase regulator THADA.